The chain runs to 388 residues: L-lactate dehydrogenase (388 aa).

Residues 1–380 (MIISAASDYR…SADALSRVTR (380 aa)) enclose the FMN hydroxy acid dehydrogenase domain. Residue Y24 coordinates substrate. FMN contacts are provided by S106 and Q127. Y129 is a binding site for substrate. Residue T155 coordinates FMN. R164 provides a ligand contact to substrate. K251 contributes to the FMN binding site. H275 (proton acceptor) is an active-site residue. Position 278 (R278) interacts with substrate. 306–330 (DSGIRSGLDVVRMLALGADAVLLGR) is a binding site for FMN.

The protein belongs to the FMN-dependent alpha-hydroxy acid dehydrogenase family. Requires FMN as cofactor.

The protein resides in the cell inner membrane. It catalyses the reaction (S)-lactate + A = pyruvate + AH2. Catalyzes the conversion of L-lactate to pyruvate. Is coupled to the respiratory chain. The polypeptide is L-lactate dehydrogenase (Xanthomonas oryzae pv. oryzae (strain MAFF 311018)).